Reading from the N-terminus, the 239-residue chain is 1-(5-phosphoribosyl)-5-[(5-phosphoribosylamino)methylideneamino] imidazole-4-carboxamide isomerase (239 aa).

Residue Asp8 is the Proton acceptor of the active site. Catalysis depends on Asp129, which acts as the Proton donor.

This sequence belongs to the HisA/HisF family.

It is found in the cytoplasm. It carries out the reaction 1-(5-phospho-beta-D-ribosyl)-5-[(5-phospho-beta-D-ribosylamino)methylideneamino]imidazole-4-carboxamide = 5-[(5-phospho-1-deoxy-D-ribulos-1-ylimino)methylamino]-1-(5-phospho-beta-D-ribosyl)imidazole-4-carboxamide. Its pathway is amino-acid biosynthesis; L-histidine biosynthesis; L-histidine from 5-phospho-alpha-D-ribose 1-diphosphate: step 4/9. The polypeptide is 1-(5-phosphoribosyl)-5-[(5-phosphoribosylamino)methylideneamino] imidazole-4-carboxamide isomerase (Legionella pneumophila (strain Lens)).